The chain runs to 246 residues: Mediator of RNA polymerase II transcription subunit 6 (246 aa).

Disordered stretches follow at residues 165 to 186 (MKKK…RSTN) and 207 to 246 (EALE…ATTK). Composition is skewed to basic and acidic residues over residues 166-184 (KKKE…EERS) and 208-224 (ALEK…KPEE).

This sequence belongs to the Mediator complex subunit 6 family. In terms of assembly, component of the Mediator complex. Interacts with let-19/mdt-13. Interacts with RNA polymerase II. Interacts with mdt-28.

The protein resides in the nucleus. Component of the Mediator complex, a coactivator involved in the regulated transcription of nearly all RNA polymerase II-dependent genes. Mediator functions as a bridge to convey information from gene-specific regulatory proteins to the basal RNA polymerase II transcription machinery. Mediator is recruited to promoters by direct interactions with regulatory proteins and serves as a scaffold for the assembly of a functional preinitiation complex with RNA polymerase II and the general transcription factors. The polypeptide is Mediator of RNA polymerase II transcription subunit 6 (mdt-6) (Caenorhabditis briggsae).